Reading from the N-terminus, the 2017-residue chain is Protein cbp-1 (2017 aa).

Residues 1–13 (MDEPPSKKSRADS) are compositionally biased toward basic and acidic residues. Residues 1–182 (MDEPPSKKSR…PGMFQGDQQQ (182 aa)) form a disordered region. Composition is skewed to low complexity over residues 21-30 (ALSALESLEA) and 78-90 (QPGQSQPQQPPQN). Positions 106–116 (NPSQTSNNSPR) are enriched in polar residues. Residues 141–151 (MMSPPSMGRVP) show a composition bias toward low complexity. Residues 152–164 (GPSPGGPQPPGPG) are compositionally biased toward pro residues. Positions 165-182 (QPQMRPGQPGMFQGDQQQ) are enriched in low complexity. Residue Arg-234 is modified to Symmetric dimethylarginine; by PRMT5; in vitro. The disordered stretch occupies residues 307–398 (SNGQPIRGPN…PGSSMLATHQ (92 aa)). Over residues 340–379 (QAAAAQHAAQQQAAAQAQAQAAAQQQQQQQREQEAAAAAQ) the composition is skewed to low complexity. Residues 399–505 (DPEKRKLIQQ…REDCPVCKPL (107 aa)) form a TAZ-type 1 zinc finger. Disordered stretches follow at residues 558 to 593 (EGFNGNPFQNGPNRGGPRPPGGNGEIPNLPPPDMPD) and 706 to 864 (GRSD…DTVF). Residues 559–573 (GFNGNPFQNGPNRGG) show a composition bias toward low complexity. The 80-residue stretch at 593–672 (DCTKEWHHQV…KIYKIQKELQ (80 aa)) folds into the KIX domain. Positions 721 to 773 (PSQQNQPWGGAPNSNMHQQIPPNGQVPQVNNSSTFPSSGNSTPNIGASSTVSA) are enriched in polar residues. Positions 834–854 (KDTKDGVAESKPKEQQAKREP) are enriched in basic and acidic residues. The Bromo domain occupies 864–970 (FSQEDLIKFL…EMFVSEMDPV (107 aa)). 2 interaction with histone regions span residues 902–948 (DYHE…YNRK) and 1224–1226 (YLD). In terms of domain architecture, CBP/p300-type HAT spans 1112–1492 (KYLASKLPHN…LAYSLHETDS (381 aa)). Acetyl-CoA is bound by residues 1225-1227 (LDS), 1237-1238 (RT), Ile-1284, Arg-1289, and Trp-1293. The segment covering 1349-1358 (NEEAQRKVKE) has biased composition (basic and acidic residues). Residues 1349-1401 (NEEAQRKVKEDDDDGEDADGGLGGGDSGKKKSSKNKKNNLKKNAKMNKKKAGS) are disordered. Residues 1378-1399 (KKSSKNKKNNLKKNAKMNKKKA) show a composition bias toward basic residues. The ZZ-type zinc-finger motif lies at 1494-1540 (GMEYTCNKCSSPAVWHCQSCDDFDLCDGCKPTTQHPHEMEKIKSLIG). Residues Cys-1499, Cys-1502, Cys-1510, Cys-1513, Cys-1519, Cys-1522, His-1528, and His-1530 each coordinate Zn(2+). The segment at 1550 to 1631 (GGTRYESIQR…ACTVPFCMNI (82 aa)) adopts a TAZ-type 2 zinc-finger fold. 2 disordered regions span residues 1656 to 1828 (GLQS…QPVR) and 1908 to 2017 (SQMS…AGGQ). Positions 1667 to 1678 (TPSTVSNGTPSN) are enriched in polar residues. The span at 1699-1708 (QVQMQQHQGS) shows a compositional bias: low complexity. Over residues 1748–1757 (PQMNANQSRY) the composition is skewed to polar residues. Low complexity-rich tracts occupy residues 1793-1812 (MNPQQQPQQQQGHPGLQNPG) and 1908-1932 (SQMSMGSSNLQNLQQQQLQQQQAGA). Residues 1943-1962 (QNNSQPRAPSGQFASMNPSM) are compositionally biased toward polar residues. The segment covering 1963–2017 (QQQYPQQQQGWPQQRQQNPGGMQQNANPYNQFQNRQNMMMMPQQQQPHPSNAGGQ) has biased composition (low complexity).

As to quaternary structure, interacts (via N-terminus domain and HAT domain) with prmt-5; the interaction results in methylation of cbp-1. Interacts (via HAT domain) with cep-1; cep-1 transcriptional activity may be inhibited by interaction with methylated cbp-1. Component of a complex that contains prmt-5 and cbp-1. In terms of processing, methylation by prmt-5 may repress the capacity of cbp-1 to enhance cep-1-dependent transcription of egl-1.

The protein resides in the nucleus. The enzyme catalyses L-lysyl-[protein] + acetyl-CoA = N(6)-acetyl-L-lysyl-[protein] + CoA + H(+). Acetyltransferase enzyme. Acetylates histones, giving a specific tag for transcriptional activation. May prevent DNA damage-induced apoptosis by inhibiting cep-1-dependent transcription activation of the programmed cell death activator egl-1. In differentiated cells, negatively regulates localization of heterochromatin to the nuclear periphery. Plays a role in migration of gonadal distal tip cells, where it probably modulates expression of genes involved in integrin-mediated adhesion. The polypeptide is Protein cbp-1 (cbp-1) (Caenorhabditis elegans).